Consider the following 1431-residue polypeptide: Collagen alpha-1(XVII) chain (1431 aa).

Over 1–468 (MDVTKKNKRD…AWCPCGSCCS (468 aa)) the chain is Cytoplasmic. The nonhelical region (NC16) stretch occupies residues 1 to 569 (MDVTKKNKRD…MTEQENGNLR (569 aa)). Disordered stretches follow at residues 25-155 (TRLT…PSTR), 167-188 (KGSR…PIPK), 304-324 (TAYG…TGVS), and 422-449 (SVEN…GGGG). Over residues 60–74 (GSSGYINSSGSIRGN) the composition is skewed to low complexity. Composition is skewed to polar residues over residues 75–96 (ASTS…SPGS), 111–120 (EGSSSGNSSP), and 170–184 (RSAS…SSTL). The necessary for interaction with DST and for the recruitment of DST to hemidesmosome stretch occupies residues 146–231 (RLQSASPSTR…WSSTLPAGSS (86 aa)). The segment covering 430-449 (RGGGSGGGARGGGGSGGGGG) has biased composition (gly residues). The helical; Signal-anchor for type II membrane protein transmembrane segment at 469–489 (WWKWLLGLLLTWLLLLGLLFG) threads the bilayer. Residues 490–1431 (LIALAEEVRK…RRRRSIAIKP (942 aa)) lie on the Extracellular side of the membrane. Position 547 is a phosphoserine; by CK2 (serine 547). Disordered stretches follow at residues 564 to 869 (ENGN…SFIS), 884 to 996 (DLRG…SSSG), 1158 to 1178 (DIIG…PGVS), and 1208 to 1249 (FIIG…SSSV). The interval 570–1417 (GNPGPKGDMG…KGDKGDKGDQ (848 aa)) is triple-helical region. 3 stretches are compositionally biased toward low complexity: residues 657–673 (PRGL…RGPN), 738–751 (EPGA…AGPD), and 778–799 (PGKP…PGRP). Pro residues-rich tracts occupy residues 823–844 (PGPP…PGPA), 889–911 (LGPP…PRGP), 937–946 (PPGPPGPPGP), 979–989 (PPGPPGPPGPP), 1162–1174 (PPGP…PRGP), and 1212–1221 (PPGPPGPQGP). The N-linked (GlcNAc...) asparagine glycan is linked to asparagine 1230. Positions 1232–1249 (SWGSSSSARRGTAYSSSV) are enriched in polar residues. Asparagine 1356 is a glycosylation site (N-linked (GlcNAc...) asparagine). The disordered stretch occupies residues 1366 to 1431 (RTHGAIPGPP…RRRRSIAIKP (66 aa)). Over residues 1407–1416 (QKGDKGDKGD) the composition is skewed to basic and acidic residues. The nonhelical region (NC1) stretch occupies residues 1418 to 1431 (VYTGRRRRSIAIKP). The segment covering 1421–1431 (GRRRRSIAIKP) has biased composition (basic residues).

Homotrimers of alpha 1(XVII)chains. Interacts (via cytoplasmic region) with ITGB4 (via cytoplasmic region). Interacts (via cytoplasmic region) with DST (via N-terminus). Interacts (via N-terminus) with PLEC. Interacts (via cytoplasmic region) with DSP. The intracellular/endo domain is disulfide-linked. Post-translationally, prolines at the third position of the tripeptide repeating unit (G-X-Y) are hydroxylated in some or all of the chains. In terms of processing, the ectodomain is shedded from the surface of keratinocytes resulting in a 120-kDa soluble form, also named as 120 kDa linear IgA disease antigen homolog. The shedding is mediated by membrane-bound metalloproteases. This cleavage is inhibited by phosphorylation at Ser-547.

It localises to the cell junction. It is found in the hemidesmosome. The protein localises to the membrane. Its subcellular location is the secreted. The protein resides in the extracellular space. It localises to the extracellular matrix. It is found in the basement membrane. May play a role in the integrity of hemidesmosome and the attachment of basal keratinocytes to the underlying basement membrane. Its function is as follows. The 120 kDa linear IgA disease antigen homolog is an anchoring filament component involved in dermal-epidermal cohesion. The protein is Collagen alpha-1(XVII) chain (COL17A1) of Mesocricetus auratus (Golden hamster).